We begin with the raw amino-acid sequence, 395 residues long: Lipoyl synthase, mitochondrial (395 aa).

A mitochondrion-targeting transit peptide spans M1–F24. Residues C107, C112, C118, C137, C141, C144, and S357 each coordinate [4Fe-4S] cluster. The Radical SAM core domain maps to G122–L346.

This sequence belongs to the radical SAM superfamily. Lipoyl synthase family. It depends on [4Fe-4S] cluster as a cofactor.

The protein localises to the mitochondrion. The enzyme catalyses [[Fe-S] cluster scaffold protein carrying a second [4Fe-4S](2+) cluster] + N(6)-octanoyl-L-lysyl-[protein] + 2 oxidized [2Fe-2S]-[ferredoxin] + 2 S-adenosyl-L-methionine + 4 H(+) = [[Fe-S] cluster scaffold protein] + N(6)-[(R)-dihydrolipoyl]-L-lysyl-[protein] + 4 Fe(3+) + 2 hydrogen sulfide + 2 5'-deoxyadenosine + 2 L-methionine + 2 reduced [2Fe-2S]-[ferredoxin]. It functions in the pathway protein modification; protein lipoylation via endogenous pathway; protein N(6)-(lipoyl)lysine from octanoyl-[acyl-carrier-protein]: step 2/2. Functionally, catalyzes the radical-mediated insertion of two sulfur atoms into the C-6 and C-8 positions of the octanoyl moiety bound to the lipoyl domains of lipoate-dependent enzymes, thereby converting the octanoylated domains into lipoylated derivatives. This Cryptococcus neoformans var. neoformans serotype D (strain B-3501A) (Filobasidiella neoformans) protein is Lipoyl synthase, mitochondrial.